The sequence spans 937 residues: Protein translocase subunit SecA (937 aa).

Residues Gln90, Gly108–Thr112, and Asp509 each bind ATP.

This sequence belongs to the SecA family. In terms of assembly, monomer and homodimer. Part of the essential Sec protein translocation apparatus which comprises SecA, SecYEG and auxiliary proteins SecDF. Other proteins may also be involved.

The protein localises to the cell inner membrane. The protein resides in the cellular thylakoid membrane. It localises to the cytoplasm. The catalysed reaction is ATP + H2O + cellular proteinSide 1 = ADP + phosphate + cellular proteinSide 2.. Part of the Sec protein translocase complex. Interacts with the SecYEG preprotein conducting channel. Has a central role in coupling the hydrolysis of ATP to the transfer of proteins into and across the cell membrane, serving as an ATP-driven molecular motor driving the stepwise translocation of polypeptide chains across the membrane. Its function is as follows. Probably participates in protein translocation into and across both the cytoplasmic and thylakoid membranes in cyanobacterial cells. In Parasynechococcus marenigrum (strain WH8102), this protein is Protein translocase subunit SecA.